The chain runs to 296 residues: Elongation factor Ts (296 aa).

Residues 79-82 form an involved in Mg(2+) ion dislocation from EF-Tu region; the sequence is TDFV.

The protein belongs to the EF-Ts family.

It localises to the cytoplasm. In terms of biological role, associates with the EF-Tu.GDP complex and induces the exchange of GDP to GTP. It remains bound to the aminoacyl-tRNA.EF-Tu.GTP complex up to the GTP hydrolysis stage on the ribosome. This Acholeplasma laidlawii (strain PG-8A) protein is Elongation factor Ts.